Consider the following 326-residue polypeptide: MRLFILAVLTVGVLGSNDDLWHQWKRMYNKEYNGADDQHRRNIWEKNVKHIQEHNLRHDLGLVTYTLGLNQFTDMTFEEFKAKYLTEMSRASDILSHGVPYEANNRAVPDKIDWRESGYVTEVKDQGNCGSCWAFSTTGTMEGQYMKNERTSISFSEQQLVDCSGPWGNNGCSGGLMENAYQYLKQFGLETESSYPYTAVEGQCRYNKQLGVAKVTGYYTVHSGSEVELKNLVGARRPAAVAVDVESDFMMYRSGIYQSQTCSPLRVNHAVLAVGYGTQGGTDYWIVKNSWGTYWGERGYIRMARNRGNMCGIASLASLPMVARFP.

Residues 1–15 form the signal peptide; that stretch reads MRLFILAVLTVGVLG. The propeptide at 16-106 is activation peptide; the sequence is SNDDLWHQWK…HGVPYEANNR (91 aa). A 3-hydroxyproline; partial modification is found at P109. 3 disulfide bridges follow: C129–C172, C163–C204, and C262–C311. Residue C132 is part of the active site. 3-hydroxyproline; partial is present on P196. Active-site residues include H269 and N289.

Belongs to the peptidase C1 family. As to quaternary structure, monomer. Post-translationally, contains cysteine residues involved in intramolecular disulfide bonding.

It localises to the secreted. Its activity is regulated as follows. Strongly inhibited by Antipain, E64 and Leupeptin, and weakly inhibited by iodoacetic acid (IAA) and phenylmethylsulfonyl fluoride (PMSF). Requires the presence of dithiothreitol (DTT) for activity. Functionally, thiol protease. Probably involved in interaction with host tissues. Displays a similar activity to that of papain. Has high activity on Z-Phe-Arg-NHMec, but no activity on Z-Arg-NHMec. The sequence is that of Cathepsin L-like proteinase from Fasciola hepatica (Liver fluke).